Here is a 206-residue protein sequence, read N- to C-terminus: Holliday junction branch migration complex subunit RuvA (206 aa).

Positions 1 to 64 (MIGRLHGIII…EDAQLLYGFN (64 aa)) are domain I. A domain II region spans residues 65-143 (TRQERTLFRE…GWISHDLFTP (79 aa)). The flexible linker stretch occupies residues 144–157 (YTDAAPVDHEPSLA). The domain III stretch occupies residues 158 to 206 (PADTVESEAVAALLALGYKPQQASLVVSKVIKPEMTVENVIREALRSML).

Belongs to the RuvA family. In terms of assembly, homotetramer. Forms an RuvA(8)-RuvB(12)-Holliday junction (HJ) complex. HJ DNA is sandwiched between 2 RuvA tetramers; dsDNA enters through RuvA and exits via RuvB. An RuvB hexamer assembles on each DNA strand where it exits the tetramer. Each RuvB hexamer is contacted by two RuvA subunits (via domain III) on 2 adjacent RuvB subunits; this complex drives branch migration. In the full resolvosome a probable DNA-RuvA(4)-RuvB(12)-RuvC(2) complex forms which resolves the HJ.

It localises to the cytoplasm. The RuvA-RuvB-RuvC complex processes Holliday junction (HJ) DNA during genetic recombination and DNA repair, while the RuvA-RuvB complex plays an important role in the rescue of blocked DNA replication forks via replication fork reversal (RFR). RuvA specifically binds to HJ cruciform DNA, conferring on it an open structure. The RuvB hexamer acts as an ATP-dependent pump, pulling dsDNA into and through the RuvAB complex. HJ branch migration allows RuvC to scan DNA until it finds its consensus sequence, where it cleaves and resolves the cruciform DNA. The sequence is that of Holliday junction branch migration complex subunit RuvA from Tolumonas auensis (strain DSM 9187 / NBRC 110442 / TA 4).